We begin with the raw amino-acid sequence, 355 residues long: UPF0324 membrane protein PA5383 (355 aa).

10 consecutive transmembrane segments (helical) span residues 20 to 37, 44 to 66, 71 to 93, 100 to 122, 137 to 159, 166 to 188, 233 to 255, 275 to 297, 307 to 324, and 331 to 353; these read IPGL…ILLG, HNGI…TLYP, GSAA…LYGL, IAGV…FGLA, TLLI…EPVV, VAVA…PALF, AVIA…SAWL, WFAV…PALV, LLAM…LSAI, and PLLL…TRLA.

This sequence belongs to the UPF0324 family.

It is found in the cell membrane. This is UPF0324 membrane protein PA5383 from Pseudomonas aeruginosa (strain ATCC 15692 / DSM 22644 / CIP 104116 / JCM 14847 / LMG 12228 / 1C / PRS 101 / PAO1).